Here is a 1404-residue protein sequence, read N- to C-terminus: DNA-directed RNA polymerase subunit beta' (1404 aa).

Positions 70, 72, 85, and 88 each coordinate Zn(2+). Positions 460, 462, and 464 each coordinate Mg(2+). Zn(2+) contacts are provided by C814, C888, C895, and C898.

It belongs to the RNA polymerase beta' chain family. The RNAP catalytic core consists of 2 alpha, 1 beta, 1 beta' and 1 omega subunit. When a sigma factor is associated with the core the holoenzyme is formed, which can initiate transcription. Mg(2+) is required as a cofactor. Requires Zn(2+) as cofactor.

The enzyme catalyses RNA(n) + a ribonucleoside 5'-triphosphate = RNA(n+1) + diphosphate. Functionally, DNA-dependent RNA polymerase catalyzes the transcription of DNA into RNA using the four ribonucleoside triphosphates as substrates. The polypeptide is DNA-directed RNA polymerase subunit beta' (Shewanella loihica (strain ATCC BAA-1088 / PV-4)).